The following is a 134-amino-acid chain: Putative pre-16S rRNA nuclease (134 aa).

This sequence belongs to the YqgF nuclease family.

It localises to the cytoplasm. In terms of biological role, could be a nuclease involved in processing of the 5'-end of pre-16S rRNA. The protein is Putative pre-16S rRNA nuclease of Helicobacter pylori (strain J99 / ATCC 700824) (Campylobacter pylori J99).